The primary structure comprises 209 residues: dTTP/UTP pyrophosphatase (209 aa).

Catalysis depends on Asp-79, which acts as the Proton acceptor.

It belongs to the Maf family. YhdE subfamily. Requires a divalent metal cation as cofactor.

Its subcellular location is the cytoplasm. The catalysed reaction is dTTP + H2O = dTMP + diphosphate + H(+). It catalyses the reaction UTP + H2O = UMP + diphosphate + H(+). Its function is as follows. Nucleoside triphosphate pyrophosphatase that hydrolyzes dTTP and UTP. May have a dual role in cell division arrest and in preventing the incorporation of modified nucleotides into cellular nucleic acids. This chain is dTTP/UTP pyrophosphatase, found in Bradyrhizobium diazoefficiens (strain JCM 10833 / BCRC 13528 / IAM 13628 / NBRC 14792 / USDA 110).